The chain runs to 123 residues: MPTIKQLIRNTRQPIRNVTKSPALGGCPQRRGTCTRVYTITPKKPNSALRKVARVRLTSGFEITAYIPGIGHNSQEHSVVLVRGGRVKDLPGVRYHIVRGTLDAVGVKDRQQGRSQYGVKKPK.

It belongs to the universal ribosomal protein uS12 family. Part of the 30S ribosomal subunit.

Its subcellular location is the plastid. It is found in the chloroplast. With S4 and S5 plays an important role in translational accuracy. Located at the interface of the 30S and 50S subunits. The polypeptide is Small ribosomal subunit protein uS12cz/uS12cy (rps12-A) (Eucalyptus globulus subsp. globulus (Tasmanian blue gum)).